The primary structure comprises 775 residues: Glutamine--tRNA ligase (775 aa).

Ala2 carries the N-acetylalanine modification. Position 70 is a phosphoserine (Ser70). A 'HIGH' region motif is present at residues 270-280 (PEPNGILHIGH). ATP is bound by residues 271–273 (EPN) and 277–283 (HIGHAKA). Asp303 lines the L-glutamine pocket. N6-acetyllysine is present on Lys309. Tyr438 contacts L-glutamine. ATP contacts are provided by residues Thr457, 486–487 (RL), and 494–496 (VSK). A 'KMSKS' region motif is present at residues 493-497 (VVSKR). Ser495 carries the phosphoserine modification.

Belongs to the class-I aminoacyl-tRNA synthetase family. Monomer. Part of a multisubunit complex that groups tRNA ligases for Arg (RARS1), Asp (DARS1), Gln (QARS1), Ile (IARS1), Leu (LARS1), Lys (KARS1), Met (MARS1) the bifunctional ligase for Glu and Pro (EPRS1) and the auxiliary subunits AIMP1/p43, AIMP2/p38 and EEF1E1/p18. Interacts with RARS1. Part of a complex composed of RARS1, QARS1 and AIMP1.

The protein localises to the cytoplasm. It is found in the cytosol. It catalyses the reaction tRNA(Gln) + L-glutamine + ATP = L-glutaminyl-tRNA(Gln) + AMP + diphosphate. Glutamine--tRNA ligase. Plays a critical role in brain development. This is Glutamine--tRNA ligase (QARS1) from Bos taurus (Bovine).